Consider the following 212-residue polypeptide: Cytidylate kinase (212 aa).

Position 7 to 15 (7 to 15 (GPAASGKGT)) interacts with ATP.

This sequence belongs to the cytidylate kinase family. Type 1 subfamily.

Its subcellular location is the cytoplasm. The enzyme catalyses CMP + ATP = CDP + ADP. The catalysed reaction is dCMP + ATP = dCDP + ADP. This is Cytidylate kinase from Rhodopseudomonas palustris (strain TIE-1).